The sequence spans 185 residues: Shikimate kinase (185 aa).

15 to 20 (GAGKST) is an ATP binding site. S19 serves as a coordination point for Mg(2+). Positions 37, 61, and 83 each coordinate substrate. ATP is bound at residue R121. R146 contacts substrate.

The protein belongs to the shikimate kinase family. Monomer. Mg(2+) serves as cofactor.

It is found in the cytoplasm. It catalyses the reaction shikimate + ATP = 3-phosphoshikimate + ADP + H(+). Its pathway is metabolic intermediate biosynthesis; chorismate biosynthesis; chorismate from D-erythrose 4-phosphate and phosphoenolpyruvate: step 5/7. Catalyzes the specific phosphorylation of the 3-hydroxyl group of shikimic acid using ATP as a cosubstrate. The sequence is that of Shikimate kinase from Blochmanniella floridana.